Here is a 294-residue protein sequence, read N- to C-terminus: Acetylglutamate kinase (294 aa).

Substrate contacts are provided by residues 47-48 (GG), Arg-69, and Asn-168.

It belongs to the acetylglutamate kinase family. ArgB subfamily.

It is found in the cytoplasm. It carries out the reaction N-acetyl-L-glutamate + ATP = N-acetyl-L-glutamyl 5-phosphate + ADP. It participates in amino-acid biosynthesis; L-arginine biosynthesis; N(2)-acetyl-L-ornithine from L-glutamate: step 2/4. Catalyzes the ATP-dependent phosphorylation of N-acetyl-L-glutamate. In Corynebacterium glutamicum (strain ATCC 13032 / DSM 20300 / JCM 1318 / BCRC 11384 / CCUG 27702 / LMG 3730 / NBRC 12168 / NCIMB 10025 / NRRL B-2784 / 534), this protein is Acetylglutamate kinase.